We begin with the raw amino-acid sequence, 210 residues long: Glutathione S-transferase 4 (210 aa).

A GST N-terminal domain is found at 1-80; sequence MDFYYLPLSA…YLVEKYGKQD (80 aa). Glutathione is bound by residues serine 9, 50-52, and 64-66; these read HTI and ESR. One can recognise a GST C-terminal domain in the interval 87-208; that stretch reads CPKKRALINQ…AGALEMKTLI (122 aa).

Belongs to the GST superfamily. Theta family. Homodimer.

It carries out the reaction RX + glutathione = an S-substituted glutathione + a halide anion + H(+). Functionally, conjugation of reduced glutathione to a wide number of exogenous and endogenous hydrophobic electrophiles. The sequence is that of Glutathione S-transferase 4 (Gst4) from Musca domestica (House fly).